We begin with the raw amino-acid sequence, 344 residues long: MTDSLTLLRPDDWHIHLRDGTALETTVPHAAASFARAIIMPNLVPPVTNAEEALAYRARIEAQIPAETPFEPLMVLYLTNNTTPETIAAAKAAGVVACKLYPAGATTNSASGVTDIQHIYPALEEMERQGVLLLLHGEVTDSAIDIFDREAVFIERTLRKVVADFPKLKIVLEHITTQQAAEFVAQAPDNVAATITAHHLLYNRNHMLAGGIRPHYYCLPILKRQTHQQALVAAATSGSPKFFLGTDSAPHAKSRKEAACGCAGSYTAFAAIELYAEAFEDAGALDRLEGFASHFGPDFYGLPRNSDTITLRREPWSVPDTLTFGDESLVPVKAGETLNWRVQK.

Residues His14 and His16 each coordinate Zn(2+). Substrate-binding positions include 16-18 (HLR) and Asn42. 3 residues coordinate Zn(2+): Lys99, His136, and His174. Lys99 carries the post-translational modification N6-carboxylysine. Substrate is bound at residue His136. Leu219 serves as a coordination point for substrate. A Zn(2+)-binding site is contributed by Asp247. Asp247 is a catalytic residue. 2 residues coordinate substrate: His251 and Ala263.

Belongs to the metallo-dependent hydrolases superfamily. DHOase family. Class II DHOase subfamily. As to quaternary structure, homodimer. Requires Zn(2+) as cofactor.

It carries out the reaction (S)-dihydroorotate + H2O = N-carbamoyl-L-aspartate + H(+). The protein operates within pyrimidine metabolism; UMP biosynthesis via de novo pathway; (S)-dihydroorotate from bicarbonate: step 3/3. Its function is as follows. Catalyzes the reversible cyclization of carbamoyl aspartate to dihydroorotate. This chain is Dihydroorotase, found in Teredinibacter turnerae (strain ATCC 39867 / T7901).